Reading from the N-terminus, the 152-residue chain is Large ribosomal subunit protein bL9 (152 aa).

It belongs to the bacterial ribosomal protein bL9 family.

Binds to the 23S rRNA. This Rippkaea orientalis (strain PCC 8801 / RF-1) (Cyanothece sp. (strain PCC 8801)) protein is Large ribosomal subunit protein bL9.